The following is a 121-amino-acid chain: NAD(P)H-quinone oxidoreductase subunit M (121 aa).

This sequence belongs to the complex I NdhM subunit family. NDH-1 can be composed of about 15 different subunits; different subcomplexes with different compositions have been identified which probably have different functions.

Its subcellular location is the cellular thylakoid membrane. It catalyses the reaction a plastoquinone + NADH + (n+1) H(+)(in) = a plastoquinol + NAD(+) + n H(+)(out). The catalysed reaction is a plastoquinone + NADPH + (n+1) H(+)(in) = a plastoquinol + NADP(+) + n H(+)(out). Functionally, NDH-1 shuttles electrons from an unknown electron donor, via FMN and iron-sulfur (Fe-S) centers, to quinones in the respiratory and/or the photosynthetic chain. The immediate electron acceptor for the enzyme in this species is believed to be plastoquinone. Couples the redox reaction to proton translocation, and thus conserves the redox energy in a proton gradient. Cyanobacterial NDH-1 also plays a role in inorganic carbon-concentration. This Synechococcus sp. (strain JA-2-3B'a(2-13)) (Cyanobacteria bacterium Yellowstone B-Prime) protein is NAD(P)H-quinone oxidoreductase subunit M.